We begin with the raw amino-acid sequence, 244 residues long: Proteasome subunit alpha type-5 (244 aa).

This sequence belongs to the peptidase T1A family. As to quaternary structure, the 26S proteasome consists of a 20S proteasome core and two 19S regulatory subunits. The 20S proteasome core is composed of 28 subunits that are arranged in four stacked rings, resulting in a barrel-shaped structure. The two end rings are each formed by seven alpha subunits, and the two central rings are each formed by seven beta subunits. The catalytic chamber with the active sites is on the inside of the barrel.

The protein resides in the cytoplasm. The protein localises to the nucleus. Functionally, the proteasome is a multicatalytic proteinase complex which is characterized by its ability to cleave peptides with Arg, Phe, Tyr, Leu, and Glu adjacent to the leaving group at neutral or slightly basic pH. The proteasome has an ATP-dependent proteolytic activity. This is Proteasome subunit alpha type-5 (Prosalpha5) from Drosophila melanogaster (Fruit fly).